Here is a 295-residue protein sequence, read N- to C-terminus: SPX domain-containing protein 1 (295 aa).

One can recognise an SPX domain in the interval 1 to 166 (MKFGKSLSSQ…GALIRLPFIQ (166 aa)). Residues 199–227 (LSVSSEDGRGDSTNEDKPSNPSSSLVNGG) form a disordered region. Over residues 204–216 (EDGRGDSTNEDKP) the composition is skewed to basic and acidic residues.

As to quaternary structure, interacts (via SPX domain) with PHR2 (via C-terminus). Interacts with RLI1 in the nucleus to prevents its positive regulation of leaf inclination during phosphate (Pi) starvation. As to expression, predominantly expressed in roots and leaves. Localized in leaves lamina joints.

The protein resides in the nucleus. In terms of biological role, involved in plant adaptation to phosphate (Pi) starvation. Inhibits PHR2 DNA-binding activity via a Pi-dependent protein interaction. Suppresses the regulation on expression of PT2 by PHR2 and accumulation of shoot Pi. Optimizes growth under phosphate-limited conditions through a negative feedback loop of the PSI (phosphate starvation-induced) signaling pathway. Regulates the expression of SPX2, SPX3 and SPX5. May be an important link between signal transduction pathways related to phosphate starvation and cold stress. Together with SPX2, plays a negative role in the regulation of leaf inclination by preventing RLI1 transcription factor activity in Pi depleted conditions. This chain is SPX domain-containing protein 1, found in Oryza sativa subsp. japonica (Rice).